The primary structure comprises 345 residues: Myb/SANT-like DNA-binding domain-containing protein 4 (345 aa).

Positions 4 to 77 constitute a Myb-like domain; the sequence is LKRKRKSNFS…EVKRRYLDWR (74 aa). Lys9 is covalently cross-linked (Glycyl lysine isopeptide (Lys-Gly) (interchain with G-Cter in SUMO2)). Residue Ser106 is modified to Phosphoserine. Residues Lys114 and Lys142 each participate in a glycyl lysine isopeptide (Lys-Gly) (interchain with G-Cter in SUMO2) cross-link. The disordered stretch occupies residues 139–175; that stretch reads TEVKVEEEERDPQSPEFEIEEEEEMLSSVIPDSRREN. Thr188 carries the phosphothreonine modification. The stretch at 202–344 forms a coiled coil; sequence HLLMNIEKQK…RLRIQKEGHL (143 aa). Residues Lys237, Lys254, and Lys273 each participate in a glycyl lysine isopeptide (Lys-Gly) (interchain with G-Cter in SUMO2) cross-link.

The sequence is that of Myb/SANT-like DNA-binding domain-containing protein 4 (Msantd4) from Mus musculus (Mouse).